The sequence spans 165 residues: UPF0114 protein in repA1-repA2 intergenic region (165 aa).

A run of 3 helical transmembrane segments spans residues 10-32 (YASRWLMFPVYIGLSLGFILLTL), 53-75 (LVLVVLSLIDISLVGGLLVMVMF), and 134-156 (DQIMWCVLIHLTFVISAFGMACI).

The protein belongs to the UPF0114 family.

It is found in the cell membrane. The chain is UPF0114 protein in repA1-repA2 intergenic region from Buchnera aphidicola subsp. Baizongia pistaciae (strain Bp).